We begin with the raw amino-acid sequence, 413 residues long: Transposon Ty4-H Gag polyprotein (413 aa).

Positions 39–115 form a coiled coil; sequence RKVSIKDEQV…IQLLETNENN (77 aa). The segment at 380–413 is disordered; sequence RQQQLKSSAKRTKVLEQDTKKVKQSVQQQKTGNY. A compositionally biased stretch (low complexity) spans 403-413; sequence QSVQQQKTGNY.

Capsid protein (CA) is the structural component of the virus-like particle (VLP), forming the shell that encapsulates the retrotransposons dimeric RNA genome. The polypeptide is Transposon Ty4-H Gag polyprotein (TY4A-H) (Saccharomyces cerevisiae (strain ATCC 204508 / S288c) (Baker's yeast)).